A 25-amino-acid polypeptide reads, in one-letter code: Chitinolytic alpha-amylase inhibitor PvCAI (25 aa).

As to quaternary structure, homodimer.

The catalysed reaction is Random endo-hydrolysis of N-acetyl-beta-D-glucosaminide (1-&gt;4)-beta-linkages in chitin and chitodextrins.. Its function is as follows. Alpha-amylase inhibitor, active against Z.subfasciatus alpha-amylase (ZSA) but not porcine pancreatic alpha-amylase (PPA). Has chitinase activity. The polypeptide is Chitinolytic alpha-amylase inhibitor PvCAI (Phaseolus vulgaris (Kidney bean)).